The following is a 308-amino-acid chain: C-4 methylsterol oxidase (308 aa).

Residues 56-76 (LLFFLTHEIFYFGRCLPWAII) form a helical membrane-spanning segment. The Fatty acid hydroxylase domain maps to 145-282 (WAVFFVLEDT…FRWWDFILDT (138 aa)). The Histidine box-1 signature appears at 160 to 164 (HRGLH). The short motif at 173 to 177 (HKQHH) is the Histidine box-2 element. The Histidine box-3 motif lies at 257–263 (HHDEHHH).

This sequence belongs to the sterol desaturase family. The cofactor is Fe cation.

It is found in the endoplasmic reticulum membrane. It catalyses the reaction 4,4-dimethyl-5alpha-cholest-7-en-3beta-ol + 6 Fe(II)-[cytochrome b5] + 3 O2 + 5 H(+) = 4alpha-carboxy-4beta-methyl-5alpha-cholest-7-ene-3beta-ol + 6 Fe(III)-[cytochrome b5] + 4 H2O. The protein operates within steroid biosynthesis; zymosterol biosynthesis; zymosterol from lanosterol: step 3/6. C-4 methylsterol oxidase; part of the third module of ergosterol biosynthesis pathway that includes the late steps of the pathway. ERG25 is a catalytic component of the C-4 demethylation complex that catalyzes the conversion of 4,4-dimethylfecosterol into fecosterol via 4-methylfecosterol. Catalyzes the three-step monooxygenation required for the demethylation of 4,4-dimethyl and 4alpha-methylsterols. The third module or late pathway involves the ergosterol synthesis itself through consecutive reactions that mainly occur in the endoplasmic reticulum (ER) membrane. Firstly, the squalene synthase ERG9 catalyzes the condensation of 2 farnesyl pyrophosphate moieties to form squalene, which is the precursor of all steroids. Squalene synthase is crucial for balancing the incorporation of farnesyl diphosphate (FPP) into sterol and nonsterol isoprene synthesis. Secondly, the squalene epoxidase ERG1 catalyzes the stereospecific oxidation of squalene to (S)-2,3-epoxysqualene, which is considered to be a rate-limiting enzyme in steroid biosynthesis. Then, the lanosterol synthase ERG7 catalyzes the cyclization of (S)-2,3 oxidosqualene to lanosterol, a reaction that forms the sterol core. In the next steps, lanosterol is transformed to zymosterol through a complex process involving various demethylation, reduction and desaturation reactions. The lanosterol 14-alpha-demethylase ERG11 (also known as CYP51) catalyzes C14-demethylation of lanosterol to produce 4,4'-dimethyl cholesta-8,14,24-triene-3-beta-ol, which is critical for ergosterol biosynthesis. The C-14 reductase ERG24 reduces the C14=C15 double bond of 4,4-dimethyl-cholesta-8,14,24-trienol to produce 4,4-dimethyl-cholesta-8,24-dienol. 4,4-dimethyl-cholesta-8,24-dienol is substrate of the C-4 demethylation complex ERG25-ERG26-ERG27 in which ERG25 catalyzes the three-step monooxygenation required for the demethylation of 4,4-dimethyl and 4alpha-methylsterols, ERG26 catalyzes the oxidative decarboxylation that results in a reduction of the 3-beta-hydroxy group at the C-3 carbon to an oxo group, and ERG27 is responsible for the reduction of the keto group on the C-3. ERG28 has a role as a scaffold to help anchor ERG25, ERG26 and ERG27 to the endoplasmic reticulum and ERG29 regulates the activity of the iron-containing C4-methylsterol oxidase ERG25. Then, the sterol 24-C-methyltransferase ERG6 catalyzes the methyl transfer from S-adenosyl-methionine to the C-24 of zymosterol to form fecosterol. The C-8 sterol isomerase ERG2 catalyzes the reaction which results in unsaturation at C-7 in the B ring of sterols and thus converts fecosterol to episterol. The sterol-C5-desaturase ERG3 then catalyzes the introduction of a C-5 double bond in the B ring to produce 5-dehydroepisterol. The C-22 sterol desaturase ERG5 further converts 5-dehydroepisterol into ergosta-5,7,22,24(28)-tetraen-3beta-ol by forming the C-22(23) double bond in the sterol side chain. Finally, ergosta-5,7,22,24(28)-tetraen-3beta-ol is substrate of the C-24(28) sterol reductase ERG4 to produce ergosterol. In Candida albicans (strain SC5314 / ATCC MYA-2876) (Yeast), this protein is C-4 methylsterol oxidase.